The primary structure comprises 815 residues: Cilia- and flagella-associated protein 251 (815 aa).

WD repeat units lie at residues Gly58–Thr99, Pro103–Glu148, Pro166–Gln205, Gln218–Gly257, Ile271–Phe308, Ser379–Gly418, Ala420–Val460, Asn463–Arg502, Ser511–Gly553, and Ser573–Ser612.

In terms of assembly, identified in a spoke-associated complex containing CFAP61, CFAP91 and CFAP251; the complex is associated with the radial spokes in the axoneme. The complex associates with Calmodulin; the association is calcium sensitive.

It localises to the cytoplasm. Its subcellular location is the cytoskeleton. The protein resides in the flagellum axoneme. Functionally, as component of a spoke-associated complex, regulates flagellar dynein activity by mediating regulatory signals between the radial spokes and dynein arms. This is Cilia- and flagella-associated protein 251 from Chlamydomonas reinhardtii (Chlamydomonas smithii).